The sequence spans 91 residues: DNA-binding protein HU (91 aa).

This sequence belongs to the bacterial histone-like protein family.

Histone-like DNA-binding protein which is capable of wrapping DNA to stabilize it, and thus to prevent its denaturation under extreme environmental conditions. Also seems to act as a fortuitous virulence factor in delayed sequelae by binding to heparan sulfate-proteoglycans in the extracellular matrix of target organs and acting as a nidus for in situ immune complex formation. The polypeptide is DNA-binding protein HU (hup) (Streptococcus pyogenes serotype M1).